A 556-amino-acid polypeptide reads, in one-letter code: Formate--tetrahydrofolate ligase (556 aa).

65–72 (TPAGEGKS) is an ATP binding site.

Belongs to the formate--tetrahydrofolate ligase family.

It carries out the reaction (6S)-5,6,7,8-tetrahydrofolate + formate + ATP = (6R)-10-formyltetrahydrofolate + ADP + phosphate. It functions in the pathway one-carbon metabolism; tetrahydrofolate interconversion. The chain is Formate--tetrahydrofolate ligase from Streptococcus pneumoniae (strain Taiwan19F-14).